The following is a 394-amino-acid chain: L-lactate dehydrogenase (394 aa).

Residues 1–380 enclose the FMN hydroxy acid dehydrogenase domain; the sequence is MIISAASDYR…SRDSLVQNAE (380 aa). Y24 is a binding site for substrate. FMN contacts are provided by S106 and Q127. Substrate is bound at residue Y129. T155 is an FMN binding site. Residue R164 coordinates substrate. FMN is bound at residue K251. The active-site Proton acceptor is H275. Position 278 (R278) interacts with substrate. 306-330 contacts FMN; that stretch reads DSGIRNGLDVVRMIALGADSVLLGR.

It belongs to the FMN-dependent alpha-hydroxy acid dehydrogenase family. The cofactor is FMN.

The protein resides in the cell inner membrane. It carries out the reaction (S)-lactate + A = pyruvate + AH2. Its function is as follows. Catalyzes the conversion of L-lactate to pyruvate. Is coupled to the respiratory chain. This Klebsiella pneumoniae (strain 342) protein is L-lactate dehydrogenase.